The chain runs to 249 residues: MSKQNQWIVGVNAVASSVENDADNVREVLIEAGSKNPRLTEIEEQARRKGIDVRRVNTQALDGVGGQVRHQGVAARYAAARLWAENELEGLVEAAQGRALVLILDGVQDPHNLGACLRSAAAAGVTAVVIPKDKSATVNATVRKTSAGAADRIPVVAVTNLARCLRDLQKQGVWLYGLAGEAEASLYSVDLRGNVGLVLGGEGDGLRRLTREHCDGLVKIPMPGDIESLNVSVATGVTLFEAVRQRLGA.

S-adenosyl-L-methionine is bound by residues Gly-200, Ile-220, and Leu-229.

It belongs to the class IV-like SAM-binding methyltransferase superfamily. RNA methyltransferase TrmH family. RlmB subfamily.

It localises to the cytoplasm. The catalysed reaction is guanosine(2251) in 23S rRNA + S-adenosyl-L-methionine = 2'-O-methylguanosine(2251) in 23S rRNA + S-adenosyl-L-homocysteine + H(+). Specifically methylates the ribose of guanosine 2251 in 23S rRNA. The chain is 23S rRNA (guanosine-2'-O-)-methyltransferase RlmB from Xanthomonas campestris pv. campestris (strain ATCC 33913 / DSM 3586 / NCPPB 528 / LMG 568 / P 25).